The chain runs to 124 residues: Large ribosomal subunit protein bL19 (124 aa).

The protein belongs to the bacterial ribosomal protein bL19 family.

Functionally, this protein is located at the 30S-50S ribosomal subunit interface and may play a role in the structure and function of the aminoacyl-tRNA binding site. In Dinoroseobacter shibae (strain DSM 16493 / NCIMB 14021 / DFL 12), this protein is Large ribosomal subunit protein bL19.